A 42-amino-acid chain; its full sequence is Cytochrome b6-f complex subunit 7 (42 aa).

A helical membrane pass occupies residues Ala-19 to Leu-37.

It belongs to the PetM family. As to quaternary structure, the 4 large subunits of the cytochrome b6-f complex are cytochrome b6, subunit IV (17 kDa polypeptide, PetD), cytochrome f and the Rieske protein, while the 4 small subunits are PetG, PetL, PetM and PetN. The complex functions as a dimer.

The protein localises to the plastid. It localises to the chloroplast thylakoid membrane. In terms of biological role, component of the cytochrome b6-f complex, which mediates electron transfer between photosystem II (PSII) and photosystem I (PSI), cyclic electron flow around PSI, and state transitions. This chain is Cytochrome b6-f complex subunit 7, found in Thalassiosira pseudonana (Marine diatom).